The following is a 299-amino-acid chain: Ribosomal RNA small subunit methyltransferase H (299 aa).

S-adenosyl-L-methionine-binding positions include 36–38 (GGH), Asp55, Asp103, and Gln110. Composition is skewed to basic and acidic residues over residues 268-282 (KPVR…ENPR) and 289-299 (RAAERIEKGGD). A disordered region spans residues 268–299 (KPVRPSEEEIRENPRARSGRLRAAERIEKGGD).

This sequence belongs to the methyltransferase superfamily. RsmH family.

It localises to the cytoplasm. It catalyses the reaction cytidine(1402) in 16S rRNA + S-adenosyl-L-methionine = N(4)-methylcytidine(1402) in 16S rRNA + S-adenosyl-L-homocysteine + H(+). In terms of biological role, specifically methylates the N4 position of cytidine in position 1402 (C1402) of 16S rRNA. This Thermotoga sp. (strain RQ2) protein is Ribosomal RNA small subunit methyltransferase H.